Reading from the N-terminus, the 65-residue chain is Large ribosomal subunit protein bL35 (65 aa).

The protein belongs to the bacterial ribosomal protein bL35 family.

The protein is Large ribosomal subunit protein bL35 of Acaryochloris marina (strain MBIC 11017).